The primary structure comprises 220 residues: Thiopurine S-methyltransferase (220 aa).

S-adenosyl-L-methionine-binding residues include Trp-10, Leu-45, Glu-66, and Arg-123.

It belongs to the class I-like SAM-binding methyltransferase superfamily. TPMT family.

The protein resides in the cytoplasm. It carries out the reaction S-adenosyl-L-methionine + a thiopurine = S-adenosyl-L-homocysteine + a thiopurine S-methylether.. The protein is Thiopurine S-methyltransferase of Nitrosomonas eutropha (strain DSM 101675 / C91 / Nm57).